A 576-amino-acid polypeptide reads, in one-letter code: Septation ring formation regulator EzrA (576 aa).

At methionine 1–isoleucine 7 the chain is on the extracellular side. The helical transmembrane segment at leucine 8–methionine 26 threads the bilayer. The Cytoplasmic segment spans residues arginine 27–leucine 576. Coiled coils occupy residues arginine 105–leucine 134, glutamate 254–glutamate 305, and glycine 356–asparagine 402.

It belongs to the EzrA family.

It localises to the cell membrane. Functionally, negative regulator of FtsZ ring formation; modulates the frequency and position of FtsZ ring formation. Inhibits FtsZ ring formation at polar sites. Interacts either with FtsZ or with one of its binding partners to promote depolymerization. The protein is Septation ring formation regulator EzrA of Lactococcus lactis subsp. cremoris (strain MG1363).